The sequence spans 502 residues: Probable glycine dehydrogenase (decarboxylating) subunit 2 (502 aa).

Lys273 is subject to N6-(pyridoxal phosphate)lysine.

This sequence belongs to the GcvP family. C-terminal subunit subfamily. In terms of assembly, the glycine cleavage system is composed of four proteins: P, T, L and H. In this organism, the P 'protein' is a heterodimer of two subunits. It depends on pyridoxal 5'-phosphate as a cofactor.

It carries out the reaction N(6)-[(R)-lipoyl]-L-lysyl-[glycine-cleavage complex H protein] + glycine + H(+) = N(6)-[(R)-S(8)-aminomethyldihydrolipoyl]-L-lysyl-[glycine-cleavage complex H protein] + CO2. Its function is as follows. The glycine cleavage system catalyzes the degradation of glycine. The P protein binds the alpha-amino group of glycine through its pyridoxal phosphate cofactor; CO(2) is released and the remaining methylamine moiety is then transferred to the lipoamide cofactor of the H protein. The protein is Probable glycine dehydrogenase (decarboxylating) subunit 2 of Pyrococcus furiosus (strain ATCC 43587 / DSM 3638 / JCM 8422 / Vc1).